A 180-amino-acid chain; its full sequence is Ribulose bisphosphate carboxylase small subunit, chloroplastic 4 (180 aa).

The transit peptide at 1-56 (MASSIVSSAAVATRGNGAQASMVAPFTGLKSTASFPVSRKQNLDITSIASNGGRVS) directs the protein to the chloroplast.

This sequence belongs to the RuBisCO small chain family. Heterohexadecamer of 8 large and 8 small subunits. As to quaternary structure, (Microbial infection) Binds to tobamovirus movement protein; this interaction seems required for viral systemic movement.

It localises to the plastid. The protein localises to the chloroplast. Its subcellular location is the cell junction. It is found in the plasmodesma. RuBisCO catalyzes two reactions: the carboxylation of D-ribulose 1,5-bisphosphate, the primary event in carbon dioxide fixation, as well as the oxidative fragmentation of the pentose substrate. Both reactions occur simultaneously and in competition at the same active site. Although the small subunit is not catalytic it is essential for maximal activity. Involved in antiviral defenses. The polypeptide is Ribulose bisphosphate carboxylase small subunit, chloroplastic 4 (Solanum lycopersicum (Tomato)).